We begin with the raw amino-acid sequence, 272 residues long: Probable feruloyl esterase C (272 aa).

Residues 1 to 22 (MVPTIIYSAILALSAFTPSVFA) form the signal peptide.

It belongs to the faeC family.

It localises to the secreted. The enzyme catalyses feruloyl-polysaccharide + H2O = ferulate + polysaccharide.. Functionally, involved in degradation of plant cell walls. Hydrolyzes the feruloyl-arabinose ester bond in arabinoxylans, and the feruloyl-galactose ester bond in pectin. Active against paranitrophenyl-acetate, methyl ferulate and wheat arabinoxylan. This Aspergillus fumigatus (strain ATCC MYA-4609 / CBS 101355 / FGSC A1100 / Af293) (Neosartorya fumigata) protein is Probable feruloyl esterase C (faeC).